The chain runs to 360 residues: Alanine racemase (360 aa).

Lysine 34 (proton acceptor; specific for D-alanine) is an active-site residue. N6-(pyridoxal phosphate)lysine is present on lysine 34. A substrate-binding site is contributed by arginine 129. Tyrosine 254 functions as the Proton acceptor; specific for L-alanine in the catalytic mechanism. Methionine 302 provides a ligand contact to substrate.

The protein belongs to the alanine racemase family. Requires pyridoxal 5'-phosphate as cofactor.

It carries out the reaction L-alanine = D-alanine. It participates in amino-acid biosynthesis; D-alanine biosynthesis; D-alanine from L-alanine: step 1/1. In terms of biological role, catalyzes the interconversion of L-alanine and D-alanine. May also act on other amino acids. This chain is Alanine racemase (alr), found in Pectobacterium atrosepticum (strain SCRI 1043 / ATCC BAA-672) (Erwinia carotovora subsp. atroseptica).